Reading from the N-terminus, the 492-residue chain is Heat shock factor protein 4 (492 aa).

The DNA-binding element occupies 17 to 121 (VPAFLGKLWA…QLLERVRRKV (105 aa)). Residues 129-203 (GRWRPEDLGR…GPLQAGPSNA (75 aa)) are hydrophobic repeat HR-A/B. An interactions with DUSP26, MAPK1 and MAPK2 region spans residues 245–322 (LPETNLGLSP…ECDFCVTAPP (78 aa)). The tract at residues 246 to 285 (PETNLGLSPHRARGPIISDIPEDSPSPEGTRLSPSSDGRR) is disordered. K293 is covalently cross-linked (Glycyl lysine isopeptide (Lys-Gly) (interchain with G-Cter in SUMO)). Phosphoserine is present on S298. The interval 337 to 400 (GSFSPEGPRN…PAGPLDVLGP (64 aa)) is disordered. The segment at 364–389 (LGLESGDRSPESLLPPMLLQPPQESV) is hydrophobic repeat HR-C. Over residues 374 to 388 (ESLLPPMLLQPPQES) the composition is skewed to low complexity.

The protein belongs to the HSF family. As to quaternary structure, homotrimer. Exhibits constitutive DNA binding and forms trimers even in the absence of stress. Interacts with ALKBH4, DUSP26, MAPK1, MAPK2, MAPK8 and MAP kinase p38. Phosphorylated mainly on serine residues. Phosphorylation on Ser-298 promotes sumoylation on Lys-293. Post-translationally, isoform HSF4B is constitutively sumoylated. Sumoylation represses the transcriptional activity and is promoted by phosphorylation on Ser-298. HSFA is not sumoylated. As to expression, expressed in heart, skeletal muscle, eye and brain, and at much lower levels in some other tissues.

It is found in the nucleus. Heat-shock transcription factor that specifically binds heat shock promoter elements (HSE). Required for denucleation and organelle rupture and degradation that occur during eye lens terminal differentiation, when fiber cells that compose the lens degrade all membrane-bound organelles in order to provide lens with transparency to allow the passage of light. In this process, may regulate denucleation of lens fiber cells in part by activating DNASE2B transcription. May be involved in DNA repair through the transcriptional regulation of RAD51. May up-regulate p53/TP53 protein in eye lens fiber cells, possibly through protein stabilization. In the eye lens, controls the expression of alpha-crystallin B chain/CRYAB and consequently may be involved in the regulation of lysosomal acidification. In terms of biological role, transcriptional repressor. Its function is as follows. Transcriptional activator. This is Heat shock factor protein 4 (HSF4) from Homo sapiens (Human).